Reading from the N-terminus, the 400-residue chain is Nicotinate phosphoribosyltransferase (400 aa).

Histidine 220 bears the Phosphohistidine; by autocatalysis mark.

The protein belongs to the NAPRTase family. Transiently phosphorylated on a His residue during the reaction cycle. Phosphorylation strongly increases the affinity for substrates and increases the rate of nicotinate D-ribonucleotide production. Dephosphorylation regenerates the low-affinity form of the enzyme, leading to product release.

The catalysed reaction is nicotinate + 5-phospho-alpha-D-ribose 1-diphosphate + ATP + H2O = nicotinate beta-D-ribonucleotide + ADP + phosphate + diphosphate. It participates in cofactor biosynthesis; NAD(+) biosynthesis; nicotinate D-ribonucleotide from nicotinate: step 1/1. In terms of biological role, catalyzes the synthesis of beta-nicotinate D-ribonucleotide from nicotinate and 5-phospho-D-ribose 1-phosphate at the expense of ATP. The protein is Nicotinate phosphoribosyltransferase of Salmonella heidelberg (strain SL476).